The sequence spans 445 residues: Aminopeptidase C (445 aa).

Residues Cys69, His363, and Asn385 contribute to the active site.

This sequence belongs to the peptidase C1 family. In terms of assembly, homohexamer.

The enzyme catalyses Inactivates bleomycin B2 (a cytotoxic glycometallopeptide) by hydrolysis of a carboxyamide bond of beta-aminoalanine, but also shows general aminopeptidase activity. The specificity varies somewhat with source, but amino acid arylamides of Met, Leu and Ala are preferred.. This chain is Aminopeptidase C (pepC), found in Streptococcus thermophilus.